A 324-amino-acid chain; its full sequence is Mitochondrial thiamine pyrophosphate carrier 1 (324 aa).

Solcar repeat units follow at residues 12 to 110 (GNRI…ISSA), 119 to 205 (PQPV…LRSP), and 212 to 307 (PFGT…VLGL). The next 6 helical transmembrane spans lie at 15-35 (IQVV…VAPL), 79-99 (ITGL…YGGI), 125-145 (FISG…LDLL), 182-202 (TAAI…YEAL), 218-238 (AGAG…LDLV), and 282-299 (GLTV…VTMW).

Belongs to the mitochondrial carrier (TC 2.A.29) family.

Its subcellular location is the mitochondrion inner membrane. Mitochondrial transporter that mediates uptake of thiamine pyrophosphate (ThPP) into mitochondria. The protein is Mitochondrial thiamine pyrophosphate carrier 1 (TPC1) of Ajellomyces capsulatus (strain NAm1 / WU24) (Darling's disease fungus).